The sequence spans 418 residues: D-amino acid dehydrogenase (418 aa).

3–17 (VLVLGAGVVGTTSAW) contributes to the FAD binding site.

The protein belongs to the DadA oxidoreductase family. The cofactor is FAD.

It carries out the reaction a D-alpha-amino acid + A + H2O = a 2-oxocarboxylate + AH2 + NH4(+). Its pathway is amino-acid degradation; D-alanine degradation; NH(3) and pyruvate from D-alanine: step 1/1. Functionally, oxidative deamination of D-amino acids. The protein is D-amino acid dehydrogenase of Dechloromonas aromatica (strain RCB).